Reading from the N-terminus, the 259-residue chain is Aliphatic sulfonates import ATP-binding protein SsuB 2 (259 aa).

An ABC transporter domain is found at 17-238 (LDILGLWKGF…VRSSQAFTSI (222 aa)). Residue 49–56 (GRSGCGKS) participates in ATP binding.

The protein belongs to the ABC transporter superfamily. Aliphatic sulfonates importer (TC 3.A.1.17.2) family. The complex is composed of two ATP-binding proteins (SsuB), two transmembrane proteins (SsuC) and a solute-binding protein (SsuA).

Its subcellular location is the cell inner membrane. The enzyme catalyses ATP + H2O + aliphatic sulfonate-[sulfonate-binding protein]Side 1 = ADP + phosphate + aliphatic sulfonateSide 2 + [sulfonate-binding protein]Side 1.. Part of the ABC transporter complex SsuABC involved in aliphatic sulfonates import. Responsible for energy coupling to the transport system. The sequence is that of Aliphatic sulfonates import ATP-binding protein SsuB 2 from Agrobacterium fabrum (strain C58 / ATCC 33970) (Agrobacterium tumefaciens (strain C58)).